The following is a 362-amino-acid chain: Aminomethyltransferase (362 aa).

Belongs to the GcvT family. The glycine cleavage system is composed of four proteins: P, T, L and H.

It carries out the reaction N(6)-[(R)-S(8)-aminomethyldihydrolipoyl]-L-lysyl-[protein] + (6S)-5,6,7,8-tetrahydrofolate = N(6)-[(R)-dihydrolipoyl]-L-lysyl-[protein] + (6R)-5,10-methylene-5,6,7,8-tetrahydrofolate + NH4(+). The glycine cleavage system catalyzes the degradation of glycine. This is Aminomethyltransferase from Chromobacterium violaceum (strain ATCC 12472 / DSM 30191 / JCM 1249 / CCUG 213 / NBRC 12614 / NCIMB 9131 / NCTC 9757 / MK).